A 419-amino-acid chain; its full sequence is Thymidine phosphorylase (419 aa).

The protein belongs to the thymidine/pyrimidine-nucleoside phosphorylase family. In terms of assembly, homodimer.

It catalyses the reaction thymidine + phosphate = 2-deoxy-alpha-D-ribose 1-phosphate + thymine. Functionally, the enzymes which catalyze the reversible phosphorolysis of pyrimidine nucleosides are involved in the degradation of these compounds and in their utilization as carbon and energy sources, or in the rescue of pyrimidine bases for nucleotide synthesis. In Mycoplasmoides pirum (Mycoplasma pirum), this protein is Thymidine phosphorylase (deoA).